The chain runs to 84 residues: uncharacterized protein (84 aa).

The next 3 helical transmembrane spans lie at 4–20 (AYVLVSGFMLVLGIKYG), 27–49 (VWKAGLIILAGFAVIFAAAWIAF), and 59–81 (IGLAKSLSVVMGLIAGVLSVYVL).

The protein resides in the cell membrane. This is an uncharacterized protein from Archaeoglobus fulgidus (strain ATCC 49558 / DSM 4304 / JCM 9628 / NBRC 100126 / VC-16).